The following is a 648-amino-acid chain: FAD-binding monooxygenase trt3 (648 aa).

FAD is bound by residues 118–121 (TWYW), 130–131 (DI), and tyrosine 136. Residue 128 to 130 (MCD) participates in NADP(+) binding. NADP(+)-binding positions include 274 to 280 (TGSTAVQ) and 297 to 298 (RT).

It belongs to the FAD-binding monooxygenase family. It depends on FAD as a cofactor.

The protein operates within secondary metabolite biosynthesis; terpenoid biosynthesis. Its function is as follows. FAD-binding monooxygenase; part of the gene cluster that mediates the biosynthesis of terretonin, a fungal meroterpenoid that acts as a mycotoxin. The first step of the pathway is the synthesis of 3,5-dimethylorsellinic acid (DMOA) by the polyketide synthase trt4. DMOA is then prenylated into farnesyl-DMOA by the polyprenyl transferase trt2. Methylation by the methyltransferase trt5 then leads to farnesyl-DMOA methyl ester which is further subject to epoxidation by the FAD-dependent monooxygenase trt8 to yield epoxyfarnesyl-DMOA methyl ester. Cyclization of epoxyfarnesyl-DMOA methyl ester by the terpene cyclase trt1 leads to a tetracycle intermediate which is in turn converted to preterretonin. Dehydrogenase trt9 comes next to transform preterretonin to preterrenoid. The FAD-dependent monooxygenase trt3 is then required for the C-hydroxylation at C16 of preterrenoid to yield terrenoid. The cytochrome P450 trt6 catalyzes three successive oxidations to transform terrenoid into an unstable intermediate, which then undergoes the D-ring expansion and unusual rearrangement of the methoxy group to afford the core skeleton of terretonin. Trt14 catalyzes the D-ring expansion of terretonin involving intramolecular methoxy rearrangement as well as the hydrolysis of the expanded D-ring and the methyl ester moiety. Finally, the nonheme iron-dependent dioxygenase trt7 accomplishes the last two oxidation reactions steps to complete the biosynthesis of terretonin. Terretonin C is produced via spontaneous decarboxylation of the terretonin precursor. Another shunt product of the terretonin biosynthesis is dihydrofarnesyl-DMOA, derived from epoxyfarnesyl-DMOA through hydrolysis of the epoxide. The polypeptide is FAD-binding monooxygenase trt3 (Aspergillus terreus (strain NIH 2624 / FGSC A1156)).